The chain runs to 742 residues: Zinc finger protein 700 (742 aa).

The tract at residues Met-1–Glu-20 is disordered. A compositionally biased stretch (basic and acidic residues) spans Ser-8–Glu-20. The region spanning Val-24–Phe-104 is the KRAB domain. 9 C2H2-type zinc fingers span residues Tyr-194 to His-216, Tyr-222 to His-244, Tyr-250 to His-272, Tyr-278 to His-300, Tyr-306 to His-328, Tyr-362 to His-384, Tyr-390 to His-412, Tyr-418 to His-440, and Tyr-446 to His-468. The C2H2-type 10; degenerate zinc finger occupies Tyr-474–Pro-502. 8 C2H2-type zinc fingers span residues Tyr-508–His-530, Tyr-536–His-558, Tyr-564–His-586, Tyr-592–His-614, Tyr-620–His-642, Tyr-648–His-670, Tyr-676–His-698, and Tyr-704–His-726.

Belongs to the krueppel C2H2-type zinc-finger protein family.

Its subcellular location is the nucleus. Functionally, may be involved in transcriptional regulation. This Homo sapiens (Human) protein is Zinc finger protein 700 (ZNF700).